The following is an 816-amino-acid chain: Leucine--tRNA ligase (816 aa).

The 'HIGH' region motif lies at 42–52 (PYPSGSLHMGH). Positions 574 to 578 (KMSKS) match the 'KMSKS' region motif. Lys-577 serves as a coordination point for ATP.

Belongs to the class-I aminoacyl-tRNA synthetase family.

The protein resides in the cytoplasm. The catalysed reaction is tRNA(Leu) + L-leucine + ATP = L-leucyl-tRNA(Leu) + AMP + diphosphate. This is Leucine--tRNA ligase from Ruthia magnifica subsp. Calyptogena magnifica.